The following is a 361-amino-acid chain: Putative geranylgeranyl pyrophosphate synthase 8, chloroplastic (361 aa).

A chloroplast-targeting transit peptide spans 1–39; that stretch reads MATTVHLSSFSLFIQSRGRRDNSISSVKSLKKRTGLSPS. A disordered region spans residues 24 to 58; it reads ISSVKSLKKRTGLSPSSALTSQGGRDMIPPQGKSN. Positions 36–46 are enriched in polar residues; it reads LSPSSALTSQG. Positions 107, 110, and 139 each coordinate isopentenyl diphosphate. Residues Asp146 and Asp152 each coordinate Mg(2+). Residue Arg157 participates in dimethylallyl diphosphate binding. Isopentenyl diphosphate is bound at residue Arg158. Residues Lys246, Thr247, Gln284, Lys301, and Lys311 each contribute to the dimethylallyl diphosphate site.

It belongs to the FPP/GGPP synthase family. In terms of assembly, monomer. It depends on Mg(2+) as a cofactor.

It is found in the plastid. The protein resides in the chloroplast. It catalyses the reaction isopentenyl diphosphate + dimethylallyl diphosphate = (2E)-geranyl diphosphate + diphosphate. The catalysed reaction is isopentenyl diphosphate + (2E)-geranyl diphosphate = (2E,6E)-farnesyl diphosphate + diphosphate. The enzyme catalyses isopentenyl diphosphate + (2E,6E)-farnesyl diphosphate = (2E,6E,10E)-geranylgeranyl diphosphate + diphosphate. It functions in the pathway isoprenoid biosynthesis; farnesyl diphosphate biosynthesis; farnesyl diphosphate from geranyl diphosphate and isopentenyl diphosphate: step 1/1. The protein operates within isoprenoid biosynthesis; geranyl diphosphate biosynthesis; geranyl diphosphate from dimethylallyl diphosphate and isopentenyl diphosphate: step 1/1. Its pathway is isoprenoid biosynthesis; geranylgeranyl diphosphate biosynthesis; geranylgeranyl diphosphate from farnesyl diphosphate and isopentenyl diphosphate: step 1/1. Functionally, catalyzes the trans-addition of the three molecules of IPP onto DMAPP to form geranylgeranyl pyrophosphate. The polypeptide is Putative geranylgeranyl pyrophosphate synthase 8, chloroplastic (Arabidopsis thaliana (Mouse-ear cress)).